A 310-amino-acid polypeptide reads, in one-letter code: Mas-related G-protein coupled receptor member E (310 aa).

The Extracellular portion of the chain corresponds to 1–22; the sequence is MTSLSVHTDSPSTQGEMAFNLT. A glycan (N-linked (GlcNAc...) asparagine) is linked at N20. A helical transmembrane segment spans residues 23–43; that stretch reads ILSLTELLSLGGLLGNGVALW. At 44 to 60 the chain is on the cytoplasmic side; the sequence is LLNQNVYRNPFSIYLLD. Residues 61–81 traverse the membrane as a helical segment; sequence VACADLIFLCCHMVAIIPELL. The Extracellular portion of the chain corresponds to 82–92; sequence QDQLNFPEFVH. The helical transmembrane segment at 93–113 threads the bilayer; sequence ISLTMLRFFCYIVGLSLLAAI. The Cytoplasmic portion of the chain corresponds to 114 to 133; that stretch reads STEQCLATLFPAWYLCRRPR. The helical transmembrane segment at 134 to 154 threads the bilayer; sequence YLTTCVCALIWVLCLLLDLLL. The Extracellular segment spans residues 155-174; it reads SGACTQFFGAPSYHLCDMLW. Residues 175 to 195 form a helical membrane-spanning segment; it reads LVVAVLLAALCCTMCVTSLLL. Topologically, residues 196 to 213 are cytoplasmic; the sequence is LLRVERGPERHQPRGFPT. A helical membrane pass occupies residues 214 to 234; it reads LVLLAVLLFLFCGLPFGIFWL. Residues 235 to 248 are Extracellular-facing; it reads SKNLSWHIPLYFYH. N237 carries N-linked (GlcNAc...) asparagine glycosylation. The helical transmembrane segment at 249–269 threads the bilayer; sequence FSFFMASVHSAAKPAIYFFLG. The Cytoplasmic portion of the chain corresponds to 270–310; sequence STPGQRFREPLRLVLQRALGDEAELGAGREASQGGLVDMTV.

It belongs to the G-protein coupled receptor 1 family. Mas subfamily.

It localises to the cell membrane. Orphan receptor. May regulate nociceptor function and/or development, including the sensation or modulation of pain. The polypeptide is Mas-related G-protein coupled receptor member E (Mrgpre) (Mus musculus (Mouse)).